A 346-amino-acid chain; its full sequence is 4-hydroxy-2-oxovalerate aldolase 2 (346 aa).

Positions Val8–Gln260 constitute a Pyruvate carboxyltransferase domain. Position 16–17 (Arg16–Asp17) interacts with substrate. Residue Asp17 coordinates Mn(2+). His20 (proton acceptor) is an active-site residue. 2 residues coordinate substrate: Ser170 and His199. Positions 199 and 201 each coordinate Mn(2+). Tyr290 is a binding site for substrate.

The protein belongs to the 4-hydroxy-2-oxovalerate aldolase family.

It carries out the reaction (S)-4-hydroxy-2-oxopentanoate = acetaldehyde + pyruvate. The polypeptide is 4-hydroxy-2-oxovalerate aldolase 2 (bphX3) (Metapseudomonas furukawaii (Pseudomonas furukawaii)).